A 32-amino-acid chain; its full sequence is Cyclotide glopa A (32 aa).

A cross-link (cyclopeptide (Gly-Asn)) is located at residues 1–32; the sequence is GGSIPCIETCVWTGCFLVPGCSCKSDKKCYLN. 3 disulfides stabilise this stretch: Cys6/Cys21, Cys10/Cys23, and Cys15/Cys29.

This is a cyclic peptide.

In terms of biological role, probably participates in a plant defense mechanism. The polypeptide is Cyclotide glopa A (Gloeospermum pauciflorum).